The primary structure comprises 400 residues: tRNA-specific adenosine deaminase TAD3 (400 aa).

The region spanning 250-385 (SQWHPLRHAS…KSLNHHYAVF (136 aa)) is the CMP/dCMP-type deaminase domain. Position 257 (H257) interacts with Zn(2+). A disordered region spans residues 273 to 320 (LFPNPSKIFDQDHVPPSNTDSPAKKQKTSSQSPDVQNDSREETVRDPS). Positions 309 to 320 (NDSREETVRDPS) are enriched in basic and acidic residues. Zn(2+) contacts are provided by C339 and C342.

The protein belongs to the cytidine and deoxycytidylate deaminase family. ADAT3 subfamily. Interacts with TAD2.

The protein resides in the nucleus. It localises to the cytoplasm. The enzyme catalyses adenosine(34) in tRNA + H2O + H(+) = inosine(34) in tRNA + NH4(+). Its function is as follows. Involved in RNA editing. Catalyzes the specific deamination of adenosine-34 in several cytosolic tRNA species. Generates inosine at the wobble position of the anticodon loop. In Arabidopsis thaliana (Mouse-ear cress), this protein is tRNA-specific adenosine deaminase TAD3.